The sequence spans 495 residues: Internal alternative NAD(P)H-ubiquinone oxidoreductase A1, mitochondrial (495 aa).

A mitochondrion-targeting transit peptide spans 1 to 41; it reads MPWFKNLIKISKTITNQSSSYKSITPLASPLLAQFLQFTKQ. 61-91 lines the FAD pocket; sequence RIVVLGSGWAGCRLMKDIDTNIYDVVCVSPR. 228 to 264 lines the NAD(+) pocket; sequence LHCVVVGGGPTGVEFSGELSDFILKDVHQRYAHVKDY. The short motif at 486 to 495 is the Microbody targeting signal element; it reads LVFGRDISRI.

Belongs to the NADH dehydrogenase family. It depends on FAD as a cofactor.

It localises to the mitochondrion inner membrane. The protein localises to the peroxisome. The catalysed reaction is a quinone + NADH + H(+) = a quinol + NAD(+). It carries out the reaction a ubiquinone + NADH + H(+) = a ubiquinol + NAD(+). Functionally, alternative NADH-ubiquinone oxidoreductase which catalyzes the oxidation of mitochondrial NADH does not translocate protons across the inner mitochondrial membrane. This chain is Internal alternative NAD(P)H-ubiquinone oxidoreductase A1, mitochondrial (NDA1), found in Solanum tuberosum (Potato).